The chain runs to 166 residues: MNIENAYDQLNAWINTSNGSYIDIGGERYSFSRLKTITKDELSNFESDNNLKLPNDYKSFLINVGCVNIFVGEKTAGIEIIPPTDIRNFSKSVFYNFGDDLYPRLLLTTSIPKLGYFGGFWMESESKENYGIFYPDIPPELWIEECDFIKFDDWLIKLVKYKSRKI.

In terms of biological role, immunity component of a toxin-immunity protein module, which functions as a cellular contact-dependent growth inhibition (CDI) system. Specifically inhibits its cognate toxin RhsB. Cell contact is necessary for growth inhibition. In Dickeya dadantii (strain 3937) (Erwinia chrysanthemi (strain 3937)), this protein is Immunity protein RhsIB (rhsIB).